Consider the following 456-residue polypeptide: Phosphomannomutase (456 aa).

Catalysis depends on S98, which acts as the Phosphoserine intermediate. 4 residues coordinate Mg(2+): S98, D245, D247, and D249.

This sequence belongs to the phosphohexose mutase family. The cofactor is Mg(2+).

The enzyme catalyses alpha-D-mannose 1-phosphate = D-mannose 6-phosphate. The protein operates within nucleotide-sugar biosynthesis; GDP-alpha-D-mannose biosynthesis; alpha-D-mannose 1-phosphate from D-fructose 6-phosphate: step 2/2. Functionally, involved in the biosynthesis of the capsular polysaccharide colanic acid. This Escherichia coli (strain K12) protein is Phosphomannomutase (manB).